The chain runs to 1343 residues: uncharacterized protein (1343 aa).

The helical transmembrane segment at 432 to 449 (LYVYFVTTKTGVVAFSLL) threads the bilayer.

Belongs to the IIV-6 295L family.

Its subcellular location is the membrane. This is an uncharacterized protein from Acheta domesticus (House cricket).